The chain runs to 118 residues: CLAVATA3/ESR (CLE)-related protein 12 (118 aa).

The signal sequence occupies residues 1 to 35 (MLRISSSSSMALKFSQILFIVLWLSLFFLLLHHLY). Basic and acidic residues-rich tracts occupy residues 75–91 (TPFH…RSGE) and 98–108 (IDPRYGVEKRR). A disordered region spans residues 75 to 118 (TPFHSRDNSRHNHRSGEQYDGDEIDPRYGVEKRRVPSGPNPLHH). Hydroxyproline is present on residues Pro-110 and Pro-113. O-linked (Ara...) hydroxyproline glycosylation is present at Pro-113.

It belongs to the CLV3/ESR signal peptide family. In terms of processing, the O-glycosylation (arabinosylation) of the hydroxyproline Pro-113 enhances binding affinity of the CLE12p peptide for its receptor. In terms of tissue distribution, mostly expressed in seedlings, roots, flowers, stems and apex, and, to a lower extent, in leaves and siliques.

Its subcellular location is the secreted. The protein resides in the extracellular space. In terms of biological role, extracellular signal peptide that regulates cell fate. Represses root apical meristem maintenance. This is CLAVATA3/ESR (CLE)-related protein 12 from Arabidopsis thaliana (Mouse-ear cress).